Consider the following 217-residue polypeptide: Pyridoxine/pyridoxamine 5'-phosphate oxidase (217 aa).

Residues 13 to 16 (RREY) and lysine 71 contribute to the substrate site. FMN-binding positions include 66–71 (RIVLLK), 81–82 (YT), arginine 87, lysine 88, and glutamine 110. 3 residues coordinate substrate: tyrosine 128, arginine 132, and serine 136. FMN contacts are provided by residues 145-146 (QS) and tryptophan 190. Residue 196-198 (RLH) participates in substrate binding. An FMN-binding site is contributed by arginine 200.

Belongs to the pyridoxamine 5'-phosphate oxidase family. As to quaternary structure, homodimer. FMN serves as cofactor.

It catalyses the reaction pyridoxamine 5'-phosphate + O2 + H2O = pyridoxal 5'-phosphate + H2O2 + NH4(+). The catalysed reaction is pyridoxine 5'-phosphate + O2 = pyridoxal 5'-phosphate + H2O2. It participates in cofactor metabolism; pyridoxal 5'-phosphate salvage; pyridoxal 5'-phosphate from pyridoxamine 5'-phosphate: step 1/1. The protein operates within cofactor metabolism; pyridoxal 5'-phosphate salvage; pyridoxal 5'-phosphate from pyridoxine 5'-phosphate: step 1/1. Its function is as follows. Catalyzes the oxidation of either pyridoxine 5'-phosphate (PNP) or pyridoxamine 5'-phosphate (PMP) into pyridoxal 5'-phosphate (PLP). The polypeptide is Pyridoxine/pyridoxamine 5'-phosphate oxidase (Serratia proteamaculans (strain 568)).